The chain runs to 133 residues: Interleukin-4 (133 aa).

An N-terminal signal peptide occupies residues methionine 1–glycine 24. Disulfide bonds link cysteine 27–cysteine 133, cysteine 48–cysteine 85, and cysteine 70–cysteine 105. A glycan (N-linked (GlcNAc...) asparagine) is linked at asparagine 62.

The protein belongs to the IL-4/IL-13 family.

The protein resides in the secreted. Its function is as follows. Participates in at least several B-cell activation processes as well as of other cell types. It is a costimulator of DNA-synthesis. It induces the expression of class II MHC molecules on resting B-cells. It enhances both secretion and cell surface expression of IgE and IgG1. It also regulates the expression of the low affinity Fc receptor for IgE (CD23) on both lymphocytes and monocytes. Positively regulates IL31RA expression in macrophages. Stimulates autophagy in dendritic cells by interfering with mTORC1 signaling and through the induction of RUFY4. This Sus scrofa (Pig) protein is Interleukin-4 (IL4).